The following is a 1648-amino-acid chain: Kinesin-like protein KIF14 (1648 aa).

Residues 1–27 (MSLHSTHNRNNSGDILDIPSSQNSSSL) form a disordered region. The tract at residues 1–356 (MSLHSTHNRN…AGKDPLKVEN (356 aa)) is required for PRC1-binding. Phosphoserine occurs at positions 12 and 272. Thr277 carries the phosphothreonine modification. Position 346 is a phosphoserine (Ser346). The interval 356–737 (NSQVTVAVRV…AAQRNSRNID (382 aa)) is required for microtubule-binding with high affinity. The 344-residue stretch at 358–701 (QVTVAVRVRP…LRYANQARLI (344 aa)) folds into the Kinesin motor domain. 447 to 454 (GQTGSGKS) provides a ligand contact to ATP. Residues 705–791 (AKVNEDMNAK…QETKELQKAG (87 aa)) adopt a coiled-coil conformation. The region spanning 825–891 (TTVGKYKPNS…LRHGDRVILG (67 aa)) is the FHA domain. The required for CIT-binding stretch occupies residues 901-1648 (PVEVQKGKRP…ECTPSRIQWV (748 aa)). Phosphothreonine is present on Thr915. A coiled-coil region spans residues 922–1079 (KDFEFAKNEL…QNRNNRDKTF (158 aa)). A phosphoserine mark is found at Ser937 and Ser1292. Coiled-coil stretches lie at residues 1332 to 1348 (TNIA…VKKL) and 1468 to 1500 (ENIF…VNRA). Residues 1600–1648 (NTKEEHQQSKSSGIDGSKNKGVPKRVYELHGSSPAVSSEECTPSRIQWV) are disordered. Polar residues predominate over residues 1633 to 1648 (PAVSSEECTPSRIQWV).

Belongs to the TRAFAC class myosin-kinesin ATPase superfamily. Kinesin family. Directly interacts with PRC1 within a complex also containing KIF4A, KIF20A and KIF23; targets to the central spindle. Directly interacts with CIT depending on the activation state of the kinase (stronger interaction with the kinase-dead form); targets to the midbody. Interacts with ARRB2; the interaction is detected in the nucleus upon OR1D2 stimulation. Interacts with AKT1; the interaction is detected in the plasma membrane upon INS stimulation and promotes AKT1 phosphorylation. Interacts with SVIL; at midbody during cytokinesis. Interacts with RADIL (via PDZ domain); recruits RADIL to the microtubule network restricting RADIL from interaction with activated RAP1A.

It localises to the nucleus. Its subcellular location is the cytoplasm. The protein localises to the cytoskeleton. It is found in the spindle. The protein resides in the midbody. Microtubule motor protein that binds to microtubules with high affinity through each tubulin heterodimer and has an ATPase activity. Plays a role in many processes like cell division, cytokinesis and also in cell proliferation and apoptosis. During cytokinesis, targets to central spindle and midbody through its interaction with PRC1 and CIT respectively. Regulates cell growth through regulation of cell cycle progression and cytokinesis. During cell cycle progression acts through SCF-dependent proteasomal ubiquitin-dependent protein catabolic process which controls CDKN1B degradation, resulting in positive regulation of cyclins, including CCNE1, CCND1 and CCNB1. During late neurogenesis, regulates the cerebellar, cerebral cortex and olfactory bulb development through regulation of apoptosis, cell proliferation and cell division. Also is required for chromosome congression and alignment during mitotic cell cycle process. Regulates cell spreading, focal adhesion dynamics, and cell migration through its interaction with RADIL resulting in regulation of RAP1A-mediated inside-out integrin activation by tethering RADIL on microtubules. This chain is Kinesin-like protein KIF14, found in Homo sapiens (Human).